Reading from the N-terminus, the 296-residue chain is Aquaporin PIP1-6 (296 aa).

2 helical membrane passes run 63–83 (IAEF…VMGV) and 98–120 (IAWA…SGGH). Positions 122–124 (NPA) match the NPA 1 motif. 3 helical membrane passes run 141–161 (VYYV…VKAF), 183–203 (GDGL…VFSA), and 217–237 (ALAP…TIPI). Residues 243-245 (NPA) carry the NPA 2 motif. Residues 265-285 (IFWVGPFAGAALAAVYHQVVL) traverse the membrane as a helical segment.

This sequence belongs to the MIP/aquaporin (TC 1.A.8) family. PIP (TC 1.A.8.11) subfamily.

The protein resides in the cell membrane. Functionally, aquaporins facilitate the transport of water and small neutral solutes across cell membranes. In Zea mays (Maize), this protein is Aquaporin PIP1-6 (PIP1-6).